The primary structure comprises 163 residues: Disulfide bond formation protein B 1 (163 aa).

Topologically, residues 1–9 are cytoplasmic; sequence MPLASPRQL. A helical membrane pass occupies residues 10 to 26; sequence FLLAFLACVAIMGGALY. Over 27 to 44 the chain is Periplasmic; it reads LEHVVGLEACPLCVVQRI. Residues cysteine 36 and cysteine 39 are joined by a disulfide bond. Residues 45-61 traverse the membrane as a helical segment; it reads FFILIGLTCLAGAIQGP. Topologically, residues 62 to 67 are cytoplasmic; it reads GLRGRR. The helical transmembrane segment at 68–85 threads the bilayer; the sequence is IYSVLVFLLALGGGATAA. The Periplasmic segment spans residues 86–142; the sequence is RQVWLQTVPLDQLPACLPSLDYMMQALPFQEVIRLVLHGTADCAQVSWTLFTLSIPE. Cysteine 101 and cysteine 128 are disulfide-bonded. Residues 143–161 form a helical membrane-spanning segment; sequence WSLLAFVAYLGFSIVQFLR. The Cytoplasmic portion of the chain corresponds to 162 to 163; it reads RA.

Belongs to the DsbB family.

Its subcellular location is the cell inner membrane. Required for disulfide bond formation in some periplasmic proteins. Acts by oxidizing the DsbA protein. The sequence is that of Disulfide bond formation protein B 1 (dsbB1) from Pseudomonas aeruginosa (strain ATCC 15692 / DSM 22644 / CIP 104116 / JCM 14847 / LMG 12228 / 1C / PRS 101 / PAO1).